The primary structure comprises 474 residues: Bifunctional protein HldE (474 aa).

Residues 1–318 form a ribokinase region; the sequence is MKLSMPRFDQ…RAVQREQGSE (318 aa). ATP is bound at residue 194–197; that stretch reads NLSE. Residue Asp263 is part of the active site. The tract at residues 343–474 is cytidylyltransferase; the sequence is FTNGCFDILH…AIVEKIRQKG (132 aa).

This sequence in the N-terminal section; belongs to the carbohydrate kinase PfkB family. It in the C-terminal section; belongs to the cytidylyltransferase family. As to quaternary structure, homodimer.

It catalyses the reaction D-glycero-beta-D-manno-heptose 7-phosphate + ATP = D-glycero-beta-D-manno-heptose 1,7-bisphosphate + ADP + H(+). The catalysed reaction is D-glycero-beta-D-manno-heptose 1-phosphate + ATP + H(+) = ADP-D-glycero-beta-D-manno-heptose + diphosphate. The protein operates within nucleotide-sugar biosynthesis; ADP-L-glycero-beta-D-manno-heptose biosynthesis; ADP-L-glycero-beta-D-manno-heptose from D-glycero-beta-D-manno-heptose 7-phosphate: step 1/4. Its pathway is nucleotide-sugar biosynthesis; ADP-L-glycero-beta-D-manno-heptose biosynthesis; ADP-L-glycero-beta-D-manno-heptose from D-glycero-beta-D-manno-heptose 7-phosphate: step 3/4. Functionally, catalyzes the phosphorylation of D-glycero-D-manno-heptose 7-phosphate at the C-1 position to selectively form D-glycero-beta-D-manno-heptose-1,7-bisphosphate. Catalyzes the ADP transfer from ATP to D-glycero-beta-D-manno-heptose 1-phosphate, yielding ADP-D-glycero-beta-D-manno-heptose. The sequence is that of Bifunctional protein HldE from Pseudomonas aeruginosa (strain UCBPP-PA14).